The chain runs to 150 residues: MPIVDSGSVAPLSAAEKTKIRSAWAPVYSNYETSGVDILVKFFTSTPAAQEFFPKFKGMTSADQLKKSADVRWHAERIINAVNDAVASMDDTEKMSMKLRDLSGKHAKSFQVDPQYFKVLAAVIADTVAAGDAGFEKLMSMICILLRSAY.

Residues 11–150 enclose the Globin domain; it reads PLSAAEKTKI…MICILLRSAY (140 aa). Positions 74 and 106 each coordinate heme b.

It belongs to the globin family. Monomer.

This Lampetra fluviatilis (European river lamprey) protein is Globin.